A 397-amino-acid chain; its full sequence is Odorant receptor 98a (397 aa).

The Cytoplasmic segment spans residues M1–Y43. A helical transmembrane segment spans residues Y44 to I64. Over S65–E77 the chain is Extracellular. Residues L78 to F98 traverse the membrane as a helical segment. Topologically, residues N99–A138 are cytoplasmic. A helical transmembrane segment spans residues Y139 to L159. The Extracellular portion of the chain corresponds to S160–M192. N187 carries N-linked (GlcNAc...) asparagine glycosylation. A helical transmembrane segment spans residues L193–L213. At R214–T266 the chain is on the cytoplasmic side. The helical transmembrane segment at I267 to F287 threads the bilayer. Residues F288–T293 lie on the Extracellular side of the membrane. The chain crosses the membrane as a helical span at residues G294–V314. Residues C315 to K354 are Cytoplasmic-facing. Residues S355 to A375 form a helical membrane-spanning segment. Over K376–N397 the chain is Extracellular.

It belongs to the insect chemoreceptor superfamily. Heteromeric odorant receptor channel (TC 1.A.69) family. Or2a subfamily. In terms of assembly, interacts with Orco. Complexes exist early in the endomembrane system in olfactory sensory neurons (OSNs), coupling these complexes to the conserved ciliary trafficking pathway. Expressed in olfactory sensory neurons in the antenna.

It is found in the cell membrane. In terms of biological role, odorant receptor which mediates acceptance or avoidance behavior, depending on its substrates. The odorant receptor repertoire encodes a large collection of odor stimuli that vary widely in identity, intensity, and duration. May form a complex with Orco to form odorant-sensing units, providing sensitive and prolonged odorant signaling and calcium permeability. This Drosophila melanogaster (Fruit fly) protein is Odorant receptor 98a (Or98a).